The primary structure comprises 139 residues: uncharacterized protein (139 aa).

Transmembrane regions (helical) follow at residues 35–55 and 119–139; these read AYFK…AAAA and CCLF…VFCV.

The protein resides in the membrane. This is an uncharacterized protein from Saccharomyces cerevisiae (strain ATCC 204508 / S288c) (Baker's yeast).